Reading from the N-terminus, the 287-residue chain is Large ribosomal subunit protein uL3 (287 aa).

The disordered stretch occupies residues 228-287 (KAPEAKPAKLSKKKQAKELAKAQAANQQTVEAKVDTPVVEPKPTEVKKAAPVVEKKGEDK). The span at 269–287 (KPTEVKKAAPVVEKKGEDK) shows a compositional bias: basic and acidic residues.

Belongs to the universal ribosomal protein uL3 family. As to quaternary structure, part of the 50S ribosomal subunit. Forms a cluster with proteins L14 and L19.

Functionally, one of the primary rRNA binding proteins, it binds directly near the 3'-end of the 23S rRNA, where it nucleates assembly of the 50S subunit. The sequence is that of Large ribosomal subunit protein uL3 from Mycoplasma pneumoniae (strain ATCC 29342 / M129 / Subtype 1) (Mycoplasmoides pneumoniae).